The sequence spans 118 residues: Large ribosomal subunit protein bL20 (118 aa).

This sequence belongs to the bacterial ribosomal protein bL20 family.

Its function is as follows. Binds directly to 23S ribosomal RNA and is necessary for the in vitro assembly process of the 50S ribosomal subunit. It is not involved in the protein synthesizing functions of that subunit. The chain is Large ribosomal subunit protein bL20 from Cyanothece sp. (strain PCC 7425 / ATCC 29141).